We begin with the raw amino-acid sequence, 277 residues long: Urease accessory protein UreD (277 aa).

Belongs to the UreD family. In terms of assembly, ureD, UreF and UreG form a complex that acts as a GTP-hydrolysis-dependent molecular chaperone, activating the urease apoprotein by helping to assemble the nickel containing metallocenter of UreC. The UreE protein probably delivers the nickel.

It localises to the cytoplasm. Functionally, required for maturation of urease via the functional incorporation of the urease nickel metallocenter. In Yersinia pestis bv. Antiqua (strain Antiqua), this protein is Urease accessory protein UreD.